The following is a 460-amino-acid chain: Nitrilase and fragile histidine triad fusion protein NitFhit (460 aa).

The region spanning Ala33 to Leu279 is the CN hydrolase domain. Active-site residues include Glu72, Lys142, and Cys183. Positions Asp315–His422 constitute an HIT domain. Residues His407–His411 carry the Histidine triad motif motif. Residue His409 is the Tele-AMP-histidine intermediate of the active site.

The protein in the N-terminal section; belongs to the UPF0012 family. Homotetramer. The cofactor is Mn(2+).

The catalysed reaction is P(1),P(3)-bis(5'-adenosyl) triphosphate + H2O = AMP + ADP + 2 H(+). Its function is as follows. Cleaves A-5'-PPP-5'A to yield AMP and ADP. The chain is Nitrilase and fragile histidine triad fusion protein NitFhit from Drosophila melanogaster (Fruit fly).